Consider the following 442-residue polypeptide: Cyclic 2,3-diphosphoglycerate synthetase (442 aa).

Belongs to the cyclic 2,3-diphosphoglycerate synthetase family.

The protein localises to the cytoplasm. The catalysed reaction is (2R)-2,3-bisphosphoglycerate + ATP + H(+) = cyclic (2R)-2,3-bisphosphoglycerate + ADP + phosphate. Functionally, catalyzes the formation of cyclic 2,3-diphosphoglycerate (cDPG) by formation of an intramolecular phosphoanhydride bond at the expense of ATP. The sequence is that of Cyclic 2,3-diphosphoglycerate synthetase from Rubrobacter xylanophilus (strain DSM 9941 / JCM 11954 / NBRC 16129 / PRD-1).